The chain runs to 136 residues: Protein K5 (136 aa).

It belongs to the poxviridae K5 protein family.

The chain is Protein K5 from Homo sapiens (Human).